The chain runs to 250 residues: DNA polymerase sliding clamp (250 aa).

It belongs to the PCNA family. As to quaternary structure, homotrimer. The subunits circularize to form a toroid; DNA passes through its center. Replication factor C (RFC) is required to load the toroid on the DNA.

Sliding clamp subunit that acts as a moving platform for DNA processing. Responsible for tethering the catalytic subunit of DNA polymerase and other proteins to DNA during high-speed replication. This chain is DNA polymerase sliding clamp, found in Methanococcus maripaludis (strain DSM 14266 / JCM 13030 / NBRC 101832 / S2 / LL).